Consider the following 386-residue polypeptide: L-lactate dehydrogenase (386 aa).

An FMN hydroxy acid dehydrogenase domain is found at 1–380; the sequence is MIISASTDYR…TSDSLVQVTQ (380 aa). Residue Y24 coordinates substrate. Residues S106 and Q127 each contribute to the FMN site. Y129 contacts substrate. T155 lines the FMN pocket. R164 serves as a coordination point for substrate. K251 lines the FMN pocket. H275 (proton acceptor) is an active-site residue. R278 contributes to the substrate binding site. 306–330 is an FMN binding site; it reads DSGIRSGLDVVRMIALGADGVMLGR.

Belongs to the FMN-dependent alpha-hydroxy acid dehydrogenase family. The cofactor is FMN.

Its subcellular location is the cell inner membrane. It carries out the reaction (S)-lactate + A = pyruvate + AH2. Functionally, catalyzes the conversion of L-lactate to pyruvate. Is coupled to the respiratory chain. In Pectobacterium atrosepticum (strain SCRI 1043 / ATCC BAA-672) (Erwinia carotovora subsp. atroseptica), this protein is L-lactate dehydrogenase.